Reading from the N-terminus, the 72-residue chain is Teretoxin Tsu11.2 (72 aa).

The N-terminal stretch at 1–21 (MMAKATMAFCFLLMLTTVMLP) is a signal peptide. Residues 22 to 30 (TEGKTIAGR) constitute a propeptide that is removed on maturation.

It belongs to the teretoxin H (TH) superfamily. Contains 4 disulfide bonds. In terms of tissue distribution, expressed by the venom duct.

Its subcellular location is the secreted. The chain is Teretoxin Tsu11.2 from Terebra subulata (Chocolate spotted auger).